The following is a 257-amino-acid chain: MADKPMIQLKDVSKIYDNGTVGLKDINLKINKGEFVVVVGLSGAGKSTLLRSINRLHDISSGDILIDGKSITNAKGKNLRELRRDIGMIFQNFNLVKRSSVLRNVLVGRVAYYPTWKTTFNLFTKEDKQKAYEALQKVDLADKVYARADELSGGQQQRVAIARVLMQNPKIILADEPTASLDPQTSVRVMNDLKMLNEKYGMTVVANLHSIELAQQFGKRVIGIRAGQVVYDGKMEDTPKSVFTDIYNGGDGNEGAE.

The region spanning 7–251 (IQLKDVSKIY…VFTDIYNGGD (245 aa)) is the ABC transporter domain. An ATP-binding site is contributed by 40–47 (GLSGAGKS).

Belongs to the ABC transporter superfamily. Phosphonates importer (TC 3.A.1.9.1) family. As to quaternary structure, the complex is composed of two ATP-binding proteins (PhnC), two transmembrane proteins (PhnE) and a solute-binding protein (PhnD).

It is found in the cell membrane. The catalysed reaction is phosphonate(out) + ATP + H2O = phosphonate(in) + ADP + phosphate + H(+). Functionally, part of the ABC transporter complex PhnCDE involved in phosphonates import. Responsible for energy coupling to the transport system. The protein is Phosphonates import ATP-binding protein PhnC of Lactobacillus acidophilus (strain ATCC 700396 / NCK56 / N2 / NCFM).